The following is a 627-amino-acid chain: Pro-interleukin-16 (627 aa).

3 disordered regions span residues 34 to 136 (HMPL…SIKQ), 162 to 267 (SSGE…LTRS), and 316 to 337 (GASPTSLSNEDSAANGCAETSG). S217 is subject to Phosphoserine. Residues 318 to 337 (SPTSLSNEDSAANGCAETSG) are compositionally biased toward polar residues. Residues 401 to 497 (KQLDSIHVTI…IVTRKLTPET (97 aa)) are interaction with PPP1R12A, PPP1R12B and PPP1R12C. 2 consecutive PDZ domains span residues 407-492 (HVTI…VTRK) and 529-614 (TVTL…IKRK).

In terms of assembly, homotetramer. Pro-interleukin-16 interacts (via PDZ 2 domain) with PPP1R12A, PPP1R12B and PPP1R12C. Pro-interleukin-16 interacts with GRIN2A. Pro-interleukin-16 interacts with GABPB1. Pro-interleukin-16 interacts (via PDZ 3 domain) with HDAC3.

It is found in the secreted. The protein localises to the cytoplasm. It localises to the nucleus. Its function is as follows. Interleukin-16 stimulates a migratory response in CD4+ lymphocytes, monocytes, and eosinophils. Primes CD4+ T-cells for IL-2 and IL-15 responsiveness. Also induces T-lymphocyte expression of interleukin 2 receptor. Ligand for CD4. Functionally, pro-interleukin-16 is involved in cell cycle progression in T-cells. Appears to be involved in transcriptional regulation of SKP2 and is probably part of a transcriptional repression complex on the core promoter of the SKP2 gene. May act as a scaffold for GABPB1 (the DNA-binding subunit the GABP transcription factor complex) and HDAC3 thus maintaining transcriptional repression and blocking cell cycle progression in resting T-cells. In Saimiri sciureus (Common squirrel monkey), this protein is Pro-interleukin-16 (IL16).